We begin with the raw amino-acid sequence, 426 residues long: Serine--tRNA ligase (426 aa).

230-232 (TSE) serves as a coordination point for L-serine. Residue 261–263 (RSE) participates in ATP binding. E284 is a binding site for L-serine. 348-351 (EISS) is a binding site for ATP. S384 contributes to the L-serine binding site.

This sequence belongs to the class-II aminoacyl-tRNA synthetase family. Type-1 seryl-tRNA synthetase subfamily. As to quaternary structure, homodimer. The tRNA molecule binds across the dimer.

The protein localises to the cytoplasm. The catalysed reaction is tRNA(Ser) + L-serine + ATP = L-seryl-tRNA(Ser) + AMP + diphosphate + H(+). The enzyme catalyses tRNA(Sec) + L-serine + ATP = L-seryl-tRNA(Sec) + AMP + diphosphate + H(+). The protein operates within aminoacyl-tRNA biosynthesis; selenocysteinyl-tRNA(Sec) biosynthesis; L-seryl-tRNA(Sec) from L-serine and tRNA(Sec): step 1/1. Catalyzes the attachment of serine to tRNA(Ser). Is also able to aminoacylate tRNA(Sec) with serine, to form the misacylated tRNA L-seryl-tRNA(Sec), which will be further converted into selenocysteinyl-tRNA(Sec). In Sphingopyxis alaskensis (strain DSM 13593 / LMG 18877 / RB2256) (Sphingomonas alaskensis), this protein is Serine--tRNA ligase.